We begin with the raw amino-acid sequence, 583 residues long: Aspartate--tRNA ligase (583 aa).

Glu-169 contributes to the L-aspartate binding site. The tract at residues 193–196 (QLFK) is aspartate. An L-aspartate-binding site is contributed by Arg-215. ATP is bound by residues 215-217 (RDE) and Gln-224. His-443 lines the L-aspartate pocket. Glu-477 lines the ATP pocket. Residue Arg-484 coordinates L-aspartate. An ATP-binding site is contributed by 529–532 (GIDR).

This sequence belongs to the class-II aminoacyl-tRNA synthetase family. Type 1 subfamily. As to quaternary structure, homodimer.

It localises to the cytoplasm. It carries out the reaction tRNA(Asp) + L-aspartate + ATP = L-aspartyl-tRNA(Asp) + AMP + diphosphate. Its function is as follows. Catalyzes the attachment of L-aspartate to tRNA(Asp) in a two-step reaction: L-aspartate is first activated by ATP to form Asp-AMP and then transferred to the acceptor end of tRNA(Asp). This Stenotrophomonas maltophilia (strain K279a) protein is Aspartate--tRNA ligase.